Consider the following 239-residue polypeptide: tRNA (guanine-N(7)-)-methyltransferase (239 aa).

Positions 69, 94, 121, and 144 each coordinate S-adenosyl-L-methionine. The active site involves D144. A substrate-binding site is contributed by K148. The tract at residues 150 to 155 (RHNKRR) is interaction with RNA. Substrate is bound by residues D180 and 217 to 220 (TKFE).

The protein belongs to the class I-like SAM-binding methyltransferase superfamily. TrmB family. Monomer.

The enzyme catalyses guanosine(46) in tRNA + S-adenosyl-L-methionine = N(7)-methylguanosine(46) in tRNA + S-adenosyl-L-homocysteine. It participates in tRNA modification; N(7)-methylguanine-tRNA biosynthesis. Its function is as follows. Catalyzes the formation of N(7)-methylguanine at position 46 (m7G46) in tRNA. This chain is tRNA (guanine-N(7)-)-methyltransferase, found in Yersinia enterocolitica serotype O:8 / biotype 1B (strain NCTC 13174 / 8081).